A 21-amino-acid chain; its full sequence is Dahlein-5.5 (21 aa).

Expressed by the skin dorsal glands.

The protein resides in the secreted. In terms of biological role, has no antimicrobial activity. Strongly inhibits the formation of NO by neuronal nitric oxide synthase at micromolar concentrations. The protein is Dahlein-5.5 of Ranoidea dahlii (Dahl's aquatic frog).